We begin with the raw amino-acid sequence, 189 residues long: NADH-quinone oxidoreductase subunit B (189 aa).

4 residues coordinate [4Fe-4S] cluster: cysteine 39, cysteine 40, cysteine 104, and cysteine 135.

It belongs to the complex I 20 kDa subunit family. As to quaternary structure, NDH-1 is composed of 14 different subunits. Subunits NuoB, C, D, E, F, and G constitute the peripheral sector of the complex. [4Fe-4S] cluster serves as cofactor.

The protein localises to the cell inner membrane. The enzyme catalyses a quinone + NADH + 5 H(+)(in) = a quinol + NAD(+) + 4 H(+)(out). Functionally, NDH-1 shuttles electrons from NADH, via FMN and iron-sulfur (Fe-S) centers, to quinones in the respiratory chain. The immediate electron acceptor for the enzyme in this species is believed to be a menaquinone. Couples the redox reaction to proton translocation (for every two electrons transferred, four hydrogen ions are translocated across the cytoplasmic membrane), and thus conserves the redox energy in a proton gradient. This is NADH-quinone oxidoreductase subunit B from Pelodictyon phaeoclathratiforme (strain DSM 5477 / BU-1).